Reading from the N-terminus, the 269-residue chain is Adenylate kinase (269 aa).

61–66 serves as a coordination point for ATP; sequence GAGKGT. The NMP stretch occupies residues 81–110; that stretch reads ATGDMLREQVARQTELGKAAKQIMDQGGLV. Residues T82, R87, 108 to 110, 137 to 140, and Q144 contribute to the AMP site; these read GLV and GFPR. An LID region spans residues 178-215; the sequence is GRLVHPASGRSYHKEFNPPKKPMTDDITGEPLIQRSDD. ATP is bound by residues R179 and 188–189; that span reads SY. 2 residues coordinate AMP: R212 and R223. Q251 lines the ATP pocket.

This sequence belongs to the adenylate kinase family. AK2 subfamily. Monomer.

The protein resides in the cytoplasm. It localises to the cytosol. Its subcellular location is the mitochondrion intermembrane space. The catalysed reaction is AMP + ATP = 2 ADP. Its function is as follows. Catalyzes the reversible transfer of the terminal phosphate group between ATP and AMP. Plays an important role in cellular energy homeostasis and in adenine nucleotide metabolism. Adenylate kinase activity is critical for regulation of the phosphate utilization and the AMP de novo biosynthesis pathways. The protein is Adenylate kinase of Cryptococcus neoformans var. neoformans serotype D (strain B-3501A) (Filobasidiella neoformans).